A 169-amino-acid chain; its full sequence is Transcription antitermination protein NusB (169 aa).

The protein belongs to the NusB family.

Involved in transcription antitermination. Required for transcription of ribosomal RNA (rRNA) genes. Binds specifically to the boxA antiterminator sequence of the ribosomal RNA (rrn) operons. The polypeptide is Transcription antitermination protein NusB (Deinococcus geothermalis (strain DSM 11300 / CIP 105573 / AG-3a)).